We begin with the raw amino-acid sequence, 658 residues long: Structure-specific endonuclease subunit SLX4 (658 aa).

Disordered stretches follow at residues 17–37, 74–123, and 327–383; these read VDSDSPMQEQDELPMTQIPGD, GATE…KSIT, and QPGV…QVLQ. Composition is skewed to low complexity over residues 75–90 and 99–108; these read ATESAPPSRAATPPAK and KAAGRTSTGT. The segment covering 365 to 374 has biased composition (polar residues); it reads FPKSPTSTPE.

This sequence belongs to the SLX4 family. As to quaternary structure, forms a heterodimer with SLX1. In terms of processing, phosphorylated in response to DNA damage.

The protein resides in the nucleus. Functionally, regulatory subunit of the SLX1-SLX4 structure-specific endonuclease that resolves DNA secondary structures generated during DNA repair and recombination. Has endonuclease activity towards branched DNA substrates, introducing single-strand cuts in duplex DNA close to junctions with ss-DNA. The polypeptide is Structure-specific endonuclease subunit SLX4 (Lachancea thermotolerans (strain ATCC 56472 / CBS 6340 / NRRL Y-8284) (Yeast)).